Consider the following 1169-residue polypeptide: Transcription-repair-coupling factor (1169 aa).

One can recognise a Helicase ATP-binding domain in the interval 634–795 (DMERERPMDR…MLGVRDLSVI (162 aa)). 647–654 (GDVGYGKT) lines the ATP pocket. The DEEQ box motif lies at 748-751 (DEEQ). The region spanning 809-970 (VLEQNSNFIK…GFKIAMRDLN (162 aa)) is the Helicase C-terminal domain.

The protein in the N-terminal section; belongs to the UvrB family. This sequence in the C-terminal section; belongs to the helicase family. RecG subfamily.

It localises to the cytoplasm. In terms of biological role, couples transcription and DNA repair by recognizing RNA polymerase (RNAP) stalled at DNA lesions. Mediates ATP-dependent release of RNAP and its truncated transcript from the DNA, and recruitment of nucleotide excision repair machinery to the damaged site. This chain is Transcription-repair-coupling factor, found in Staphylococcus haemolyticus (strain JCSC1435).